The sequence spans 261 residues: Homeobox protein ceh-33 (261 aa).

Positions 133–192 (GEETSYCFRDKSRVLLRDWYCRNSYPSPREKRELAEKTHLTVTQVSNWFKNRRQRDRAGV) form a DNA-binding region, homeobox.

This sequence belongs to the SIX/Sine oculis homeobox family.

The protein resides in the nucleus. This is Homeobox protein ceh-33 (ceh-33) from Caenorhabditis elegans.